The primary structure comprises 459 residues: Putrescine aminotransferase (459 aa).

Residues 150 to 151 and Gln-274 contribute to the pyridoxal 5'-phosphate site; that span reads GT. Position 300 is an N6-(pyridoxal phosphate)lysine (Lys-300). Thr-332 contributes to the pyridoxal 5'-phosphate binding site.

The protein belongs to the class-III pyridoxal-phosphate-dependent aminotransferase family. Putrescine aminotransferase subfamily. It depends on pyridoxal 5'-phosphate as a cofactor.

The enzyme catalyses an alkane-alpha,omega-diamine + 2-oxoglutarate = an omega-aminoaldehyde + L-glutamate. It catalyses the reaction putrescine + 2-oxoglutarate = 1-pyrroline + L-glutamate + H2O. The catalysed reaction is cadaverine + 2-oxoglutarate = 5-aminopentanal + L-glutamate. The protein operates within amine and polyamine degradation; putrescine degradation; 4-aminobutanal from putrescine (transaminase route): step 1/1. In terms of biological role, catalyzes the aminotransferase reaction from putrescine to 2-oxoglutarate, leading to glutamate and 4-aminobutanal, which spontaneously cyclizes to form 1-pyrroline. This is the first step in one of two pathways for putrescine degradation, where putrescine is converted into 4-aminobutanoate (gamma-aminobutyrate or GABA) via 4-aminobutanal. Also functions as a cadaverine transaminase in a a L-lysine degradation pathway to succinate that proceeds via cadaverine, glutarate and L-2-hydroxyglutarate. The protein is Putrescine aminotransferase of Escherichia coli O81 (strain ED1a).